We begin with the raw amino-acid sequence, 331 residues long: MLTLTAGKKAAMDRLSTQEGIISALAIDQRGALKKMIKALDVEPTDAQIETFKELVSKELTPYASAILLDPEYGLPAAKARDTEAGLLLAYEKTGYDATTPGRLPDLLADWSVLRLKEEGADAIKFLLYYDVDEDPEINHQKHVFIERLGSECAEEDLPFYLELVSYDAQIADATSLEYAKVKPHKVNEMMKEFSKPQYKVDVLKVEVPVNMNFVEGFAPAETAYTKEEAANYFLEQSQATDLPFIFLSAGVSTELFQETLRFAKEAGSTFNGVLCGRATWKNGVKPFVEAGETAACDWLKTEGRENIESLNEVIAATASSWHAKVQVNEG.

This sequence belongs to the aldolase LacD family.

The catalysed reaction is D-tagatofuranose 1,6-bisphosphate = D-glyceraldehyde 3-phosphate + dihydroxyacetone phosphate. It participates in carbohydrate metabolism; D-tagatose 6-phosphate degradation; D-glyceraldehyde 3-phosphate and glycerone phosphate from D-tagatose 6-phosphate: step 2/2. The protein is Tagatose 1,6-diphosphate aldolase 2 (lacD2) of Enterococcus faecalis (strain ATCC 700802 / V583).